We begin with the raw amino-acid sequence, 437 residues long: UDP-glucuronate 4-epimerase 4 (437 aa).

A helical membrane pass occupies residues 30–50; sequence SLTKFAFFSFFLLCLISLLFL. Positions 56–76 are disordered; it reads INPSSPSDPSRRSLRTNTYGG. A helical membrane pass occupies residues 96–116; that stretch reads GITVLVTGAAGFVGTHVSAAL. 98–129 lines the NAD(+) pocket; the sequence is TVLVTGAAGFVGTHVSAALKRRGDGVIGLDNF. Residue Tyr248 is the Proton acceptor of the active site.

This sequence belongs to the NAD(P)-dependent epimerase/dehydratase family. In terms of assembly, homodimer. In terms of tissue distribution, in roots, leaves, siliques, flowers, pollen and stems.

The protein localises to the golgi apparatus. The protein resides in the golgi stack membrane. It carries out the reaction UDP-alpha-D-glucuronate = UDP-alpha-D-galacturonate. Activated by glycerol, not effected by dimethyl sulfoxide and inhibited by high concentration of monovalent salts, UDP-xylose, UDP-arabinose or UDP. Functionally, involved in the synthesis of the negatively charged monosaccharide that forms the backbone of pectic cell wall components. This chain is UDP-glucuronate 4-epimerase 4 (GAE4), found in Arabidopsis thaliana (Mouse-ear cress).